A 61-amino-acid polypeptide reads, in one-letter code: Large ribosomal subunit protein bL32 (61 aa).

Residues 1 to 10 show a composition bias toward basic residues; it reads MAQPKKKTSN. Residues 1-23 are disordered; that stretch reads MAQPKKKTSNAKRDQRRATWKRK.

The protein belongs to the bacterial ribosomal protein bL32 family.

This chain is Large ribosomal subunit protein bL32, found in Gloeobacter violaceus (strain ATCC 29082 / PCC 7421).